We begin with the raw amino-acid sequence, 676 residues long: Palmitoyl-CoA ligase FUM16 (676 aa).

Residue 245 to 256 (IMYTSGSTGLPN) coordinates AMP. Residues 552–655 (KLESIYRTSQ…SGLVTPTMKL (104 aa)) form an AMP-binding region.

It belongs to the ATP-dependent AMP-binding enzyme family.

Its subcellular location is the endoplasmic reticulum. The protein operates within mycotoxin biosynthesis. Functionally, palmitoyl-CoA ligase; part of the gene cluster that mediates the biosynthesis of fumonisins B1 (FB1), B2 (FB2), B3 (FB3), and B4 (FB4), which are carcinogenic mycotoxins. Plays a role in the synthesis of ceramide and is involved in self-protection from fumonisin B1 toxicity. The biosynthesis starts with the FUM1-catalyzed carbon chain assembly from one molecule of acetyl-CoA, eight molecules of malonyl-CoA, and two molecules of methionine (in S-adenosyl form). The C18 polyketide chain is released from the enzyme by a nucleophilic attack of a carbanion, which is derived from R-carbon of alanine by decarboxylation, on the carbonyl carbon of polyketide acyl chain. This step is catalyzed by the pyridoxal 5'-phosphate-dependent aminoacyl transferase FUM8. The resultant 3-keto intermediate is then stereospecifically reduced to a 3-hydroxyl product by reductase FUM13. Subsequent oxidations at C-10 by the cytochrome P450 monooxygenase FUM2, C-14 and C-15 by FUM6, FUM12 or FUM15, tricarballylic esterification of the hydroxyl groups on C-14 and C-15 by acyltransferase FUM14, and C-5 hydroxylation by 2-keto-glutarate-dependent dioxygenase FUM3 furnish the biosynthesis of fumonisins. The tricarballylic moieties are most likely derived from the citric acid cycle, and their addition to the carbon backbone may involve FUM7, FUM10, FUM11 and FUM14. This Gibberella moniliformis (strain M3125 / FGSC 7600) (Maize ear and stalk rot fungus) protein is Palmitoyl-CoA ligase FUM16.